A 172-amino-acid polypeptide reads, in one-letter code: Small ribosomal subunit protein uS5 (172 aa).

Residues 17–80 (LREKMISVNR…EQARRNMFKV (64 aa)) enclose the S5 DRBM domain.

The protein belongs to the universal ribosomal protein uS5 family. As to quaternary structure, part of the 30S ribosomal subunit. Contacts proteins S4 and S8.

In terms of biological role, with S4 and S12 plays an important role in translational accuracy. Functionally, located at the back of the 30S subunit body where it stabilizes the conformation of the head with respect to the body. The chain is Small ribosomal subunit protein uS5 from Burkholderia orbicola (strain AU 1054).